The primary structure comprises 372 residues: UDP-N-acetylenolpyruvoylglucosamine reductase (372 aa).

Positions 29-205 (VGPTARRLIT…LEVEFALDAS (177 aa)) constitute an FAD-binding PCMH-type domain. Residue Arg-177 is part of the active site. Ser-260 functions as the Proton donor in the catalytic mechanism. Glu-364 is an active-site residue.

This sequence belongs to the MurB family. FAD is required as a cofactor.

Its subcellular location is the cytoplasm. The catalysed reaction is UDP-N-acetyl-alpha-D-muramate + NADP(+) = UDP-N-acetyl-3-O-(1-carboxyvinyl)-alpha-D-glucosamine + NADPH + H(+). It participates in cell wall biogenesis; peptidoglycan biosynthesis. In terms of biological role, cell wall formation. The sequence is that of UDP-N-acetylenolpyruvoylglucosamine reductase from Mycobacterium avium (strain 104).